The sequence spans 121 residues: Large ribosomal subunit protein bL12 (121 aa).

It belongs to the bacterial ribosomal protein bL12 family. In terms of assembly, homodimer. Part of the ribosomal stalk of the 50S ribosomal subunit. Forms a multimeric L10(L12)X complex, where L10 forms an elongated spine to which 2 to 4 L12 dimers bind in a sequential fashion. Binds GTP-bound translation factors.

Forms part of the ribosomal stalk which helps the ribosome interact with GTP-bound translation factors. Is thus essential for accurate translation. The chain is Large ribosomal subunit protein bL12 from Lactococcus lactis subsp. cremoris (strain MG1363).